The following is a 592-amino-acid chain: Protein US23 (592 aa).

The tract at residues 407 to 491 is disordered; the sequence is PRSLGDGEEE…NNVVPNVDRR (85 aa). Over residues 460 to 481 the composition is skewed to acidic residues; sequence ADDEEQGEDDDDSGAEPMEPEE.

This sequence belongs to the herpesviridae US22 family.

It localises to the virion tegument. This chain is Protein US23 (US23), found in Homo sapiens (Human).